The chain runs to 435 residues: Gamma-glutamyl phosphate reductase (435 aa).

It belongs to the gamma-glutamyl phosphate reductase family.

The protein localises to the cytoplasm. The enzyme catalyses L-glutamate 5-semialdehyde + phosphate + NADP(+) = L-glutamyl 5-phosphate + NADPH + H(+). The protein operates within amino-acid biosynthesis; L-proline biosynthesis; L-glutamate 5-semialdehyde from L-glutamate: step 2/2. Its function is as follows. Catalyzes the NADPH-dependent reduction of L-glutamate 5-phosphate into L-glutamate 5-semialdehyde and phosphate. The product spontaneously undergoes cyclization to form 1-pyrroline-5-carboxylate. The protein is Gamma-glutamyl phosphate reductase of Bradyrhizobium diazoefficiens (strain JCM 10833 / BCRC 13528 / IAM 13628 / NBRC 14792 / USDA 110).